Here is an 855-residue protein sequence, read N- to C-terminus: Homeobox-leucine zipper protein HOX33 (855 aa).

Residues 1–21 (MAAAAVGGRGERLSSSSPTAA) form a disordered region. A DNA-binding region (homeobox) is located at residues 26–89 (DAGKYVRYTP…NRRCREKQRK (64 aa)). Residues 84–126 (REKQRKEASRLQTVNRKLNAMNKLLMEENDRLQKQVSRLVYEN) are a coiled coil. The region spanning 168 to 390 (DANNPAGLLA…LRHIRQIAHE (223 aa)) is the START domain.

Belongs to the HD-ZIP homeobox family. Class III subfamily. Expressed in seedlings, roots, stems, leaf sheaths and blades and panicles.

It is found in the nucleus. Its function is as follows. Probable transcription factor. This is Homeobox-leucine zipper protein HOX33 (HOX33) from Oryza sativa subsp. indica (Rice).